The sequence spans 804 residues: Phenylalanine--tRNA ligase beta subunit (804 aa).

Positions 38–148 (RSSLKGFVIA…EDAPIGGLFA (111 aa)) constitute a tRNA-binding domain. The B5 domain maps to 401-476 (PEIKQIAFPF…RIYGLDKIEP (76 aa)). Asp-454, Asp-460, Glu-463, and Glu-464 together coordinate Mg(2+). Positions 710-803 (SPFQMVRRDF…VTKATGAYLR (94 aa)) constitute an FDX-ACB domain.

This sequence belongs to the phenylalanyl-tRNA synthetase beta subunit family. Type 1 subfamily. As to quaternary structure, tetramer of two alpha and two beta subunits. Requires Mg(2+) as cofactor.

It localises to the cytoplasm. It carries out the reaction tRNA(Phe) + L-phenylalanine + ATP = L-phenylalanyl-tRNA(Phe) + AMP + diphosphate + H(+). The chain is Phenylalanine--tRNA ligase beta subunit from Bartonella quintana (strain Toulouse) (Rochalimaea quintana).